We begin with the raw amino-acid sequence, 330 residues long: Inorganic pyrophosphatase 2, mitochondrial (330 aa).

Residues 1-27 (MRALLPLLSVGRGWRVGAAARPPRRVM) constitute a mitochondrion transit peptide. Mg(2+) contacts are provided by Asp159, Asp164, and Asp196. Residue Lys211 is modified to N6-succinyllysine. Residue Lys219 is modified to N6-acetyllysine. Lys254 carries the post-translational modification N6-succinyllysine. At Lys256 the chain carries N6-acetyllysine.

This sequence belongs to the PPase family. Homodimer. It depends on Mg(2+) as a cofactor.

Its subcellular location is the mitochondrion. The enzyme catalyses diphosphate + H2O = 2 phosphate + H(+). Hydrolyzes inorganic pyrophosphate. This activity is essential for correct regulation of mitochondrial membrane potential, and mitochondrial organization and function. The polypeptide is Inorganic pyrophosphatase 2, mitochondrial (Ppa2) (Mus musculus (Mouse)).